We begin with the raw amino-acid sequence, 387 residues long: Probable serine protease FE772_23060 (387 aa).

The protein belongs to the peptidase S1 family.

Functionally, possibly a dedicated protease for substrate gasdermin bGSDM; cleaves the bGSDM precursor, releasing the pore-forming moiety, which integrates into the membrane and triggers cell death. Involved in defense against bacteriophages. When this probable 4 gene operon (bGSDM-FE772_23060-FE772_23065-FE772_23070) is inserted into E.coli it provides nearly 100-fold protection against phages T5 and T6 and about 8-fold against phage T4. The operon without bGSDM no longer protects against phage. This is Probable serine protease FE772_23060 from Lysobacter enzymogenes.